Reading from the N-terminus, the 162-residue chain is Universal stress protein MJ0577 (162 aa).

ATP-binding positions include P11, V41, 127–133, and 141–143; these read GSHGKTN and SVT.

Belongs to the universal stress protein A family. In terms of assembly, homodimer. Mn(2+) is required as a cofactor.

It localises to the cytoplasm. The polypeptide is Universal stress protein MJ0577 (Methanocaldococcus jannaschii (strain ATCC 43067 / DSM 2661 / JAL-1 / JCM 10045 / NBRC 100440) (Methanococcus jannaschii)).